The primary structure comprises 409 residues: uncharacterized protein (409 aa).

Position 46 (H46) interacts with Zn(2+). E49 functions as the Proton acceptor in the catalytic mechanism. Zn(2+) contacts are provided by H50 and E126.

The protein belongs to the peptidase M16 family. The cofactor is Zn(2+).

This is an uncharacterized protein from Bacillus subtilis (strain 168).